A 65-amino-acid chain; its full sequence is DNA-directed RNA polymerase subunit Rpo10 (65 aa).

C7, C10, C44, and C45 together coordinate Zn(2+).

It belongs to the archaeal Rpo10/eukaryotic RPB10 RNA polymerase subunit family. In terms of assembly, part of the RNA polymerase complex. Zn(2+) is required as a cofactor.

It localises to the cytoplasm. It carries out the reaction RNA(n) + a ribonucleoside 5'-triphosphate = RNA(n+1) + diphosphate. Functionally, DNA-dependent RNA polymerase (RNAP) catalyzes the transcription of DNA into RNA using the four ribonucleoside triphosphates as substrates. This Nanoarchaeum equitans (strain Kin4-M) protein is DNA-directed RNA polymerase subunit Rpo10.